Here is a 176-residue protein sequence, read N- to C-terminus: Translation initiation factor IF-3 (176 aa).

It belongs to the IF-3 family. As to quaternary structure, monomer.

Its subcellular location is the cytoplasm. IF-3 binds to the 30S ribosomal subunit and shifts the equilibrium between 70S ribosomes and their 50S and 30S subunits in favor of the free subunits, thus enhancing the availability of 30S subunits on which protein synthesis initiation begins. The protein is Translation initiation factor IF-3 of Streptococcus thermophilus (strain ATCC BAA-491 / LMD-9).